The chain runs to 1125 residues: MADLSLVDALTEPPPEIEGEIKRDFMAALEAEPYDDIVGETVEKTEFIPLLDGDEKTGNSESKKKPCLDTSQVEGIPSSKPTLLANGDHGMEGNNTAGSPTDFLEERVDYPDYQSSQNWPEDASFCFQPQQVLDTDQAEPFNEHRDDGLADLLFVSSGPTNASAFTERDNPSEDSYGMLPCDSFASTAVVSQEWSVGAPNSPCSESCVSPEVTIETLQPATELSKAAEVESVKEQLPAKALETMAEQTTDVVHSPSTDTTPGPDTEAALAKDIEEITKPDVILANVTQPSTESDMFLAQDMELLTGTEAAHANNIILPTEPDESSTKDVAPPMEEEIVPGNDTTSPKETETTLPIKMDLAPPEDVLLTKETELAPAKGMVSLSEIEEALAKNDESSAEIPVAQETVVSETEVVLATEVVLPSDPITTLTKDVTLPLEAERPLVTDMTPSLETEMTLGKETAPPTETNLGMAKDMSPLPESEVTLGKDVVILPETKVAEFNNVTPLSEEEVTSVKDMSPSAETEAPLAKNADLHSGTELIVDNSMAPASDLALPLETKVATVPIKDKGTVQTEEKPREDSQLASMQHKGQSTVPPCTASPEPVKAAEQMSTLPIDAPSPLENLEQKETPGSQPSEPCSGVSRQEEAKAAVGVTGNDITTPPNKEPPPSPEKKAKPLATTQPAKTSTSKAKTQPTSLPKQPAPTTSGGLNKKPMSLASGSVPAAPHKRPAAATATARPSTLPARDVKPKPITEAKVAEKRTSPSKPSSAPALKPGPKTTPTVSKATSPSTLVSTGPSSRSPATTLPKRPTSIKTEGKPADVKRMTAKSASADLSRSKTTSASSVKRNTTPTGAAPPAGMTSTRVKPMSAPSRSSGALSVDKKPTSTKPSSSAPRVSRLATTVSAPDLKSVRSKVGSTENIKHQPGGGRAKVEKKTEAATTAGKPEPNAVTKAAGSIASAQKPPAGKVQIVSKKVSYSHIQSKCGSKDNIKHVPGGGNVQIQNKKVDISKVSSKCGSKANIKHKPGGGDVKIESQKLNFKEKAQAKVGSLDNVGHLPAGGAVKTEGGGSEALPCPGPPAGEEPVIPEAAPDAGAPTSASGLSGHTTLSGGGDQREPQTLDSQIQETSI.

Ala-2 is modified (N-acetylalanine). Phosphoserine is present on residues Ser-5, Ser-60, Ser-99, and Ser-254. Disordered stretches follow at residues 49 to 103 (PLLD…PTDF) and 245 to 265 (AEQT…GPDT). Positions 53–67 (GDEKTGNSESKKKPC) are enriched in basic and acidic residues. Residues 254–265 (SPSTDTTPGPDT) show a composition bias toward low complexity. Phosphothreonine occurs at positions 260 and 277. The disordered stretch occupies residues 315–361 (IILPTEPDESSTKDVAPPMEEEIVPGNDTTSPKETETTLPIKMDLAP). Phosphoserine is present on residues Met-333 and Glu-334. Position 349 is a phosphothreonine (Thr-349). A Phosphoserine modification is found at Ser-381. Phosphothreonine is present on residues Thr-410 and Thr-447. Positions 455–478 (TLGKETAPPTETNLGMAKDMSPLP) are disordered. Phosphoserine is present on Ser-475. 2 positions are modified to phosphothreonine: Thr-494 and Thr-503. At Ser-506 the chain carries Phosphoserine. Disordered stretches follow at residues 508-529 (EEVT…LAKN) and 563-964 (IKDK…PAGK). Thr-511 bears the Phosphothreonine mark. 3 positions are modified to phosphoserine: Ser-512, Ser-517, and Ser-519. Residues 563–579 (IKDKGTVQTEEKPREDS) are compositionally biased toward basic and acidic residues. Residues 580-593 (QLASMQHKGQSTVP) are compositionally biased toward polar residues. Phosphoserine occurs at positions 598 and 617. Residue Thr-658 is modified to Phosphothreonine. 3 positions are modified to phosphoserine: Ser-667, Ser-684, and Ser-694. Residues 676 to 706 (ATTQPAKTSTSKAKTQPTSLPKQPAPTTSGG) are compositionally biased toward polar residues. Residues 728–741 (AAATATARPSTLPA) are compositionally biased toward low complexity. Residues 742–759 (RDVKPKPITEAKVAEKRT) show a composition bias toward basic and acidic residues. Ser-760 bears the Phosphoserine mark. Over residues 761–774 (PSKPSSAPALKPGP) the composition is skewed to low complexity. A compositionally biased stretch (polar residues) spans 776–801 (TTPTVSKATSPSTLVSTGPSSRSPAT). Phosphoserine is present on Ser-798. A Glycyl lysine isopeptide (Lys-Gly) (interchain with G-Cter in SUMO2) cross-link involves residue Lys-811. Residues 812 to 821 (TEGKPADVKR) are compositionally biased toward basic and acidic residues. The span at 825-849 (KSASADLSRSKTTSASSVKRNTTPT) shows a compositional bias: polar residues. Phosphoserine is present on residues Ser-826, Ser-901, and Ser-914. Tau/MAP repeat units lie at residues 896–926 (LATT…GGGR), 965–995 (VQIV…GGGN), 996–1026 (VQIQ…GGGD), and 1027–1058 (VKIE…AGGA). Thr-915 carries the post-translational modification Phosphothreonine. Residue Ser-973 is modified to Phosphoserine. Ser-1046 carries the phosphoserine modification. A disordered region spans residues 1047 to 1125 (LDNVGHLPAG…LDSQIQETSI (79 aa)). Low complexity predominate over residues 1093 to 1104 (TSASGLSGHTTL). The span at 1115–1125 (TLDSQIQETSI) shows a compositional bias: polar residues. Phosphoserine occurs at positions 1118 and 1124.

As to quaternary structure, interacts with SEPTIN2; this interaction impedes tubulin-binding. Interacts with TRAF3IP1. Interacts with KNSTRN. Post-translationally, phosphorylated at serine residues in K-X-G-S motifs by MAP/microtubule affinity-regulating kinase (MARK1 or MARK2), causing detachment from microtubules, and their disassembly. Phosphorylation on Ser-760 negatively regulates MAP4 activity to promote microtubule assembly. Isoform 4 is phosphorylated on Ser-333 and Ser-334. In terms of tissue distribution, testis, striated and cardiac muscle.

Its subcellular location is the cytoplasm. It is found in the cytoskeleton. The protein localises to the microtubule organizing center. Non-neuronal microtubule-associated protein. Promotes microtubule assembly. The polypeptide is Microtubule-associated protein 4 (Map4) (Mus musculus (Mouse)).